We begin with the raw amino-acid sequence, 204 residues long: Large ribosomal subunit protein bL25 (204 aa).

It belongs to the bacterial ribosomal protein bL25 family. CTC subfamily. As to quaternary structure, part of the 50S ribosomal subunit; part of the 5S rRNA/L5/L18/L25 subcomplex. Contacts the 5S rRNA. Binds to the 5S rRNA independently of L5 and L18.

This is one of the proteins that binds to the 5S RNA in the ribosome where it forms part of the central protuberance. The chain is Large ribosomal subunit protein bL25 from Pseudomonas syringae pv. syringae (strain B728a).